Reading from the N-terminus, the 201-residue chain is Proteasome subunit beta 1 (201 aa).

Position 1 (M1) is a propeptide, removed in mature form; by autocatalysis. The active-site Nucleophile is T2.

It belongs to the peptidase T1B family. As to quaternary structure, the 20S proteasome core is composed of 14 alpha and 14 beta subunits that assemble into four stacked heptameric rings, resulting in a barrel-shaped structure. The two inner rings, each composed of seven catalytic beta subunits, are sandwiched by two outer rings, each composed of seven alpha subunits. The catalytic chamber with the active sites is on the inside of the barrel. Has a gated structure, the ends of the cylinder being occluded by the N-termini of the alpha-subunits. Is capped at one or both ends by the proteasome regulatory ATPase, PAN.

Its subcellular location is the cytoplasm. It catalyses the reaction Cleavage of peptide bonds with very broad specificity.. Its activity is regulated as follows. The formation of the proteasomal ATPase PAN-20S proteasome complex, via the docking of the C-termini of PAN into the intersubunit pockets in the alpha-rings, triggers opening of the gate for substrate entry. Interconversion between the open-gate and close-gate conformations leads to a dynamic regulation of the 20S proteasome proteolysis activity. In terms of biological role, component of the proteasome core, a large protease complex with broad specificity involved in protein degradation. The chain is Proteasome subunit beta 1 from Pyrobaculum calidifontis (strain DSM 21063 / JCM 11548 / VA1).